Consider the following 136-residue polypeptide: uncharacterized protein (136 aa).

To E.coli YcgX and YdfO.

This is an uncharacterized protein from Escherichia coli (strain K12).